Reading from the N-terminus, the 424-residue chain is Enolase (424 aa).

Glutamine 162 contributes to the (2R)-2-phosphoglycerate binding site. Glutamate 204 serves as the catalytic Proton donor. Mg(2+) is bound by residues aspartate 241, glutamate 284, and aspartate 311. (2R)-2-phosphoglycerate is bound by residues lysine 336, arginine 365, serine 366, and lysine 387. Lysine 336 functions as the Proton acceptor in the catalytic mechanism.

It belongs to the enolase family. Mg(2+) serves as cofactor.

It localises to the cytoplasm. Its subcellular location is the secreted. The protein localises to the cell surface. It catalyses the reaction (2R)-2-phosphoglycerate = phosphoenolpyruvate + H2O. The protein operates within carbohydrate degradation; glycolysis; pyruvate from D-glyceraldehyde 3-phosphate: step 4/5. In terms of biological role, catalyzes the reversible conversion of 2-phosphoglycerate (2-PG) into phosphoenolpyruvate (PEP). It is essential for the degradation of carbohydrates via glycolysis. The polypeptide is Enolase (Sinorhizobium medicae (strain WSM419) (Ensifer medicae)).